A 178-amino-acid polypeptide reads, in one-letter code: Small ribosomal subunit protein uS4 (178 aa).

An S4 RNA-binding domain is found at 104-166 (RRLQTMVYKK…PNSPMASENH (63 aa)). The interval 157–178 (PNSPMASENHPERTAAVSEENQ) is disordered.

This sequence belongs to the universal ribosomal protein uS4 family. Part of the 30S ribosomal subunit. Contacts protein S5. The interaction surface between S4 and S5 is involved in control of translational fidelity.

Functionally, one of the primary rRNA binding proteins, it binds directly to 16S rRNA where it nucleates assembly of the body of the 30S subunit. Its function is as follows. With S5 and S12 plays an important role in translational accuracy. The protein is Small ribosomal subunit protein uS4 of Methanococcus maripaludis (strain C7 / ATCC BAA-1331).